Consider the following 567-residue polypeptide: Proline--tRNA ligase (567 aa).

This sequence belongs to the class-II aminoacyl-tRNA synthetase family. ProS type 1 subfamily. Homodimer.

Its subcellular location is the cytoplasm. It carries out the reaction tRNA(Pro) + L-proline + ATP = L-prolyl-tRNA(Pro) + AMP + diphosphate. Functionally, catalyzes the attachment of proline to tRNA(Pro) in a two-step reaction: proline is first activated by ATP to form Pro-AMP and then transferred to the acceptor end of tRNA(Pro). As ProRS can inadvertently accommodate and process non-cognate amino acids such as alanine and cysteine, to avoid such errors it has two additional distinct editing activities against alanine. One activity is designated as 'pretransfer' editing and involves the tRNA(Pro)-independent hydrolysis of activated Ala-AMP. The other activity is designated 'posttransfer' editing and involves deacylation of mischarged Ala-tRNA(Pro). The misacylated Cys-tRNA(Pro) is not edited by ProRS. The protein is Proline--tRNA ligase of Staphylococcus aureus (strain COL).